The following is a 114-amino-acid chain: Protein preY, mitochondrial (114 aa).

The N-terminal 35 residues, 1–35, are a transit peptide targeting the mitochondrion; that stretch reads MLSGARCRLASALRGTRAPPSAVARRCLHASGSRP. The disordered stretch occupies residues 14 to 49; sequence RGTRAPPSAVARRCLHASGSRPLADRGKKTEEPPRD. Over residues 36-49 the composition is skewed to basic and acidic residues; the sequence is LADRGKKTEEPPRD. The TRM112 domain maps to 51 to 97; that stretch reads DPALLEFLVCPLSKKPLRYEASTNELINEELGIAYPIIDGIPNMIPQ.

It belongs to the PREY family. As to quaternary structure, interacts (via TRM112 domain) with NDUFAF5; the interaction is direct and stabilizes NDUFAF5 protein. Interacts with COQ5; the interaction is direct, stabilizes COQ5 protein and associates PYURF with COQ enzyme complex.

It is found in the mitochondrion. Functionally, in mitochondria, S-adenosylmethionine-dependent methyltransferase chaperone that supports both coenzyme Q biosynthesis, by stabilizing its components, such as COQ5, and NADH:ubiquinone oxidoreductase complex (complex I, MT-ND1) assembly, by stabilizing complex I assembly factors, such as NDUFAF5. The chain is Protein preY, mitochondrial from Homo sapiens (Human).